The chain runs to 1003 residues: Helicase MOV-10 (1003 aa).

Lys148 is subject to N6-acetyllysine. 2 positions are modified to phosphothreonine: Thr160 and Thr254. Residue Ser432 is modified to Phosphoserine. 524-531 (GPPGTGKT) lines the ATP pocket. The DEAG box motif lies at 645 to 648 (DEAG). Positions 921–965 (NPLLLGHDPDWKVFLEFCKENGGYTGCPFPAKLDLQQGQNLLQGL) are interaction with AGO2 and APOBEC3G. Residues 966–1003 (SKLSPSTSGPHSHDYLPQEREGEGGLSLQVEPEWRNEL) form a disordered region. Phosphoserine is present on residues Ser969 and Ser977. Over residues 976–988 (HSHDYLPQEREGE) the composition is skewed to basic and acidic residues.

The protein belongs to the DNA2/NAM7 helicase family. SDE3 subfamily. As to quaternary structure, interacts with DICER1, AGO2, TARBP2, EIF6 and RPL7A (60S ribosome subunit); they form a large RNA-induced silencing complex (RISC). Interacts with APOBEC3G in an RNA-dependent manner. Interacts with TRIM71 (via NHL repeats) in an RNA-dependent manner. Interacts with both protein products of LIRE1, ORF1p and ORF2p. Interacts with TUT4 and, to a lesser extent, TUT7; the interactions are RNA-dependent. Interacts with AGO2, TNRC6B and UPF1; the interactions are direct and RNA-dependent. Interacts with FMR1; this interaction is direct, occurs in an RNA-dependent manner on polysomes and induces association of MOV10 with RNAs. Interacts with SHFL; the interaction increases in presence of RNA. Interacts with DHX34; the interaction is RNA-independent. Interacts with IKBKE. Interacts with RBM46. (Microbial infection) Interacts with the human hepatitis delta virus (HDV) antigen HDAg. In terms of assembly, (Microbial infection) Interacts with HIV-1 protein GAG. Post-translationally, ubiquitinated by the DCX(DCAF12) complex that specifically recognizes the glutamate-leucine (Glu-Leu) degron at the C-terminus, leading to its degradation. (Microbial infection) Cleaved and targeted for degradation by picornavirus proteases.

It localises to the cytoplasm. The protein localises to the P-body. The protein resides in the cytoplasmic ribonucleoprotein granule. It is found in the stress granule. Its subcellular location is the nucleus. The catalysed reaction is ATP + H2O = ADP + phosphate + H(+). Functionally, 5' to 3' RNA helicase that is involved in a number of cellular roles ranging from mRNA metabolism and translation, modulation of viral infectivity, inhibition of retrotransposition, or regulation of synaptic transmission. Plays an important role in innate antiviral immunity by promoting type I interferon production. Mechanistically, specifically uses IKKepsilon/IKBKE as the mediator kinase for IRF3 activation. Blocks HIV-1 virus replication at a post-entry step. Counteracts HIV-1 Vif-mediated degradation of APOBEC3G through its helicase activity by interfering with the ubiquitin-proteasome pathway. Also inhibits hepatitis B virus/HBV replication by interacting with HBV RNA and thereby inhibiting the early step of viral reverse transcription. Contributes to UPF1 mRNA target degradation by translocation along 3' UTRs. Required for microRNA (miRNA)-mediated gene silencing by the RNA-induced silencing complex (RISC). Required for both miRNA-mediated translational repression and miRNA-mediated cleavage of complementary mRNAs by RISC. In cooperation with FMR1, regulates miRNA-mediated translational repression by AGO2. Restricts retrotransposition of long interspersed element-1 (LINE-1) in cooperation with TUT4 and TUT7 counteracting the RNA chaperonne activity of L1RE1. Facilitates LINE-1 uridylation by TUT4 and TUT7. Required for embryonic viability and for normal central nervous system development and function. Plays two critical roles in early brain development: suppresses retroelements in the nucleus by directly inhibiting cDNA synthesis, while regulates cytoskeletal mRNAs to influence neurite outgrowth in the cytosol. May function as a messenger ribonucleoprotein (mRNP) clearance factor. Its function is as follows. (Microbial infection) Required for RNA-directed transcription and replication of the human hepatitis delta virus (HDV). Interacts with small capped HDV RNAs derived from genomic hairpin structures that mark the initiation sites of RNA-dependent HDV RNA transcription. This is Helicase MOV-10 from Homo sapiens (Human).